A 206-amino-acid chain; its full sequence is MSRYRGPRLKIVRRLGPLPGFTQKLYKSKSQYLGSSTTSSSSNKKISQYNIRLLEKQKLRFYYGLTERQLLKYVTIARNAKGPTGQVLLQLLEMRLDNIVFRLGMAPTIPAARQLVNHRHILVNDFTVNIPSYSCKLGDKISVQKRFESKTNIFANSTQSASLKVPSHLTLNPAKNEGLVHQIVDREFIGAKINELLVVEYYSRQV.

In terms of domain architecture, S4 RNA-binding spans 94 to 152 (MRLDNIVFRLGMAPTIPAARQLVNHRHILVNDFTVNIPSYSCKLGDKISVQKRFESKTN).

Belongs to the universal ribosomal protein uS4 family. In terms of assembly, part of the 30S ribosomal subunit. Contacts protein S5. The interaction surface between S4 and S5 is involved in control of translational fidelity.

It localises to the plastid. The protein localises to the chloroplast. Its function is as follows. One of the primary rRNA binding proteins, it binds directly to 16S rRNA where it nucleates assembly of the body of the 30S subunit. Functionally, with S5 and S12 plays an important role in translational accuracy. This Chara vulgaris (Common stonewort) protein is Small ribosomal subunit protein uS4c (rps4).